Here is a 415-residue protein sequence, read N- to C-terminus: Glutamyl-tRNA reductase (415 aa).

Substrate is bound by residues 49 to 52 (TCNR), S104, 109 to 111 (EPQ), and Q115. The active-site Nucleophile is C50. Residue 184–189 (GAGEMI) coordinates NADP(+).

It belongs to the glutamyl-tRNA reductase family. As to quaternary structure, homodimer.

The enzyme catalyses (S)-4-amino-5-oxopentanoate + tRNA(Glu) + NADP(+) = L-glutamyl-tRNA(Glu) + NADPH + H(+). The protein operates within porphyrin-containing compound metabolism; protoporphyrin-IX biosynthesis; 5-aminolevulinate from L-glutamyl-tRNA(Glu): step 1/2. Catalyzes the NADPH-dependent reduction of glutamyl-tRNA(Glu) to glutamate 1-semialdehyde (GSA). This is Glutamyl-tRNA reductase from Neisseria meningitidis serogroup C / serotype 2a (strain ATCC 700532 / DSM 15464 / FAM18).